We begin with the raw amino-acid sequence, 698 residues long: Polyribonucleotide nucleotidyltransferase (698 aa).

The Mg(2+) site is built by Asp-485 and Asp-491. Residues 552 to 611 (PRITTIKINPEKIRDVIGKGGAVIRALTEETGTTIELDDDGTVKIASSNGEATKEAIRRI) enclose the KH domain. The region spanning 621–689 (GRVYNGKVIR…RQGRVRLSIK (69 aa)) is the S1 motif domain.

This sequence belongs to the polyribonucleotide nucleotidyltransferase family. In terms of assembly, component of the RNA degradosome, which is a multiprotein complex involved in RNA processing and mRNA degradation. Mg(2+) is required as a cofactor.

The protein resides in the cytoplasm. The catalysed reaction is RNA(n+1) + phosphate = RNA(n) + a ribonucleoside 5'-diphosphate. Its function is as follows. Involved in mRNA degradation. Catalyzes the phosphorolysis of single-stranded polyribonucleotides processively in the 3'- to 5'-direction. The sequence is that of Polyribonucleotide nucleotidyltransferase from Shewanella denitrificans (strain OS217 / ATCC BAA-1090 / DSM 15013).